Reading from the N-terminus, the 358-residue chain is Glyoxylate/succinic semialdehyde reductase 2, chloroplastic (358 aa).

Residues 1 to 44 (MPLVSLSFASSSSKAMALCSICPRIPLRFRPKPISPFLSKPQIC) constitute a chloroplast transit peptide. Residues 70–84 (GFLG…MAQN) and T161 each bind NADP(+). K236 is an active-site residue. K304 contributes to the NADP(+) binding site.

Belongs to the HIBADH-related family. NP60 subfamily.

The protein localises to the plastid. The protein resides in the chloroplast stroma. The catalysed reaction is glycolate + NADP(+) = glyoxylate + NADPH + H(+). The enzyme catalyses 4-hydroxybutanoate + NADP(+) = succinate semialdehyde + NADPH + H(+). Its activity is regulated as follows. The ratio of NADPH/NADP(+) may regulate enzymatic activity. Catalyzes the NADPH-dependent reduction of glyoxylate to glycolate as well as succinic semialdehyde (SSA) to gamma-hydroxybutyrate in vitro. May function in redox homeostasis and play a role in oxidative stress tolerance by detoxifying glyoxylate and SSA generated in glycolate metabolism and GABA metabolism, respectively. The protein is Glyoxylate/succinic semialdehyde reductase 2, chloroplastic (GLYR2) of Arabidopsis thaliana (Mouse-ear cress).